We begin with the raw amino-acid sequence, 85 residues long: Putative sodium channel toxin Ts37 (85 aa).

The N-terminal stretch at 1–20 (MAGEWACLLVSLVLLWGAAG) is a signal peptide. The region spanning 22 to 83 (RDGFLLDRNF…KIWGDSVRCR (62 aa)) is the LCN-type CS-alpha/beta domain. 4 cysteine pairs are disulfide-bonded: cysteine 32-cysteine 82, cysteine 36-cysteine 59, cysteine 45-cysteine 64, and cysteine 49-cysteine 66.

Belongs to the long (4 C-C) scorpion toxin superfamily. Sodium channel inhibitor family. In terms of tissue distribution, expressed by the venom gland.

The protein resides in the secreted. Putative sodium channel toxin. This is Putative sodium channel toxin Ts37 from Tityus serrulatus (Brazilian scorpion).